A 489-amino-acid polypeptide reads, in one-letter code: Rhamnulokinase (489 aa).

Ala-13 to Arg-17 provides a ligand contact to ATP. Cys-68 and Cys-222 form a disulfide bridge. Substrate-binding positions include Gly-83 and His-236 to Thr-238. Residue Asp-237 is the Proton acceptor of the active site. Residue Thr-259 participates in ATP binding. Asn-296 contributes to the substrate binding site. Residue Gln-304 coordinates ATP. Cys-353 and Cys-370 form a disulfide bridge. Gly-402 lines the ATP pocket. Cys-413 and Cys-417 are oxidised to a cystine.

Belongs to the rhamnulokinase family. Monomer. It depends on Mg(2+) as a cofactor.

The catalysed reaction is L-rhamnulose + ATP = L-rhamnulose 1-phosphate + ADP + H(+). It functions in the pathway carbohydrate degradation; L-rhamnose degradation; glycerone phosphate from L-rhamnose: step 2/3. In terms of biological role, involved in the catabolism of L-rhamnose (6-deoxy-L-mannose). Catalyzes the transfer of the gamma-phosphate group from ATP to the 1-hydroxyl group of L-rhamnulose to yield L-rhamnulose 1-phosphate. The polypeptide is Rhamnulokinase (Escherichia coli O157:H7).